The following is a 498-amino-acid chain: UDP-N-acetylmuramoyl-L-alanyl-D-glutamate--2,6-diaminopimelate ligase (498 aa).

Residue S29 coordinates UDP-N-acetyl-alpha-D-muramoyl-L-alanyl-D-glutamate. 120 to 126 is a binding site for ATP; the sequence is GTDGKTS. UDP-N-acetyl-alpha-D-muramoyl-L-alanyl-D-glutamate is bound by residues 162–163, S189, Q195, and R197; that span reads TT. K229 carries the post-translational modification N6-carboxylysine. Meso-2,6-diaminopimelate contacts are provided by residues R392, 416 to 419, G466, and E470; that span reads DNPR. The Meso-diaminopimelate recognition motif signature appears at 416-419; sequence DNPR.

Belongs to the MurCDEF family. MurE subfamily. The cofactor is Mg(2+). In terms of processing, carboxylation is probably crucial for Mg(2+) binding and, consequently, for the gamma-phosphate positioning of ATP.

Its subcellular location is the cytoplasm. The catalysed reaction is UDP-N-acetyl-alpha-D-muramoyl-L-alanyl-D-glutamate + meso-2,6-diaminopimelate + ATP = UDP-N-acetyl-alpha-D-muramoyl-L-alanyl-gamma-D-glutamyl-meso-2,6-diaminopimelate + ADP + phosphate + H(+). Its pathway is cell wall biogenesis; peptidoglycan biosynthesis. In terms of biological role, catalyzes the addition of meso-diaminopimelic acid to the nucleotide precursor UDP-N-acetylmuramoyl-L-alanyl-D-glutamate (UMAG) in the biosynthesis of bacterial cell-wall peptidoglycan. This is UDP-N-acetylmuramoyl-L-alanyl-D-glutamate--2,6-diaminopimelate ligase from Alkalilimnicola ehrlichii (strain ATCC BAA-1101 / DSM 17681 / MLHE-1).